The following is a 490-amino-acid chain: Ribulose bisphosphate carboxylase large chain (490 aa).

Substrate-binding residues include Asn127 and Thr177. Lys179 (proton acceptor) is an active-site residue. Lys181 contacts substrate. Mg(2+)-binding residues include Lys205, Asp207, and Glu208. At Lys205 the chain carries N6-carboxylysine. His297 serves as the catalytic Proton acceptor. The substrate site is built by Arg298, His330, and Ser382.

This sequence belongs to the RuBisCO large chain family. Type I subfamily. In terms of assembly, heterohexadecamer of 8 large chains and 8 small chains. Mg(2+) serves as cofactor.

The protein resides in the plastid. The protein localises to the chloroplast. It carries out the reaction 2 (2R)-3-phosphoglycerate + 2 H(+) = D-ribulose 1,5-bisphosphate + CO2 + H2O. The enzyme catalyses D-ribulose 1,5-bisphosphate + O2 = 2-phosphoglycolate + (2R)-3-phosphoglycerate + 2 H(+). In terms of biological role, ruBisCO catalyzes two reactions: the carboxylation of D-ribulose 1,5-bisphosphate, the primary event in carbon dioxide fixation, as well as the oxidative fragmentation of the pentose substrate in the photorespiration process. Both reactions occur simultaneously and in competition at the same active site. This is Ribulose bisphosphate carboxylase large chain from Cylindrotheca sp. (strain N1) (Marine diatom).